Reading from the N-terminus, the 105-residue chain is Platelet factor 4 (105 aa).

Residues 1–29 (MSVAAVFRGLRPSPELLLLGLLFLPAVVA) form the signal peptide. An O-linked (GalNAc...) threonine glycan is attached at threonine 31. 2 disulfides stabilise this stretch: cysteine 44–cysteine 71 and cysteine 46–cysteine 87. Serine 61 carries the post-translational modification Phosphoserine. 96-102 (KKVIKKI) contacts heparin.

It belongs to the intercrine alpha (chemokine CxC) family. Homotetramer. Interacts with TNFAIP6 (via Link domain). Interacts with CCR1. Interacts with CXCR3. Interacts with THBD; this interaction enhances generation of activated protein C.

The protein resides in the secreted. Chemokine released during platelet aggregation that plays a role in different biological processes including hematopoiesis, cell proliferation, differentiation, and activation. Acts via different functional receptors including CCR1, CXCR3A or CXCR3B. Upon interaction with CXCR3A receptor, induces activated T-lymphocytes migration mediated via downstream Ras/extracellular signal-regulated kinase (ERK) signaling. Neutralizes the anticoagulant effect of heparin by binding more strongly to heparin than to the chondroitin-4-sulfate chains of the carrier molecule. Plays a role in the inhibition of hematopoiesis and in the maintenance of hematopoietic stem cell (HSC) quiescence. Chemotactic for neutrophils and monocytes via CCR1. Inhibits endothelial cell proliferation. In cooperation with toll-like receptor 8/TLR8, induces chromatin remodeling and activates inflammatory gene expression via the TBK1-IRF5 axis. In addition, induces myofibroblast differentiation and collagen synthesis in different precursor cells, including endothelial cells, by stimulating endothelial-to-mesenchymal transition. Interacts with thrombomodulin/THBD to enhance the activation of protein C and thus potentiates its anticoagulant activity. The sequence is that of Platelet factor 4 (Pf4) from Mus musculus (Mouse).